The primary structure comprises 194 residues: Molybdenum cofactor guanylyltransferase (194 aa).

Residues 12–14 (LAG), lysine 25, asparagine 53, aspartate 70, and aspartate 100 contribute to the GTP site. Aspartate 100 lines the Mg(2+) pocket.

This sequence belongs to the MobA family. In terms of assembly, monomer. Requires Mg(2+) as cofactor.

It localises to the cytoplasm. It catalyses the reaction Mo-molybdopterin + GTP + H(+) = Mo-molybdopterin guanine dinucleotide + diphosphate. Functionally, transfers a GMP moiety from GTP to Mo-molybdopterin (Mo-MPT) cofactor (Moco or molybdenum cofactor) to form Mo-molybdopterin guanine dinucleotide (Mo-MGD) cofactor. The sequence is that of Molybdenum cofactor guanylyltransferase from Vibrio atlanticus (strain LGP32) (Vibrio splendidus (strain Mel32)).